The primary structure comprises 204 residues: Large ribosomal subunit protein eL15 (204 aa).

This sequence belongs to the eukaryotic ribosomal protein eL15 family. As to quaternary structure, component of the large ribosomal subunit.

The protein resides in the cytoplasm. Component of the large ribosomal subunit. The ribosome is a large ribonucleoprotein complex responsible for the synthesis of proteins in the cell. The chain is Large ribosomal subunit protein eL15 (rpl15) from Cyprinus carpio (Common carp).